Consider the following 127-residue polypeptide: MARIAGVDLPRNKRIEIAITYIFGIGRSNGAEVLRKANVNPATRVRDLTEEEVSRIREIVEREYRVEGDLRREIQMNIKRLMDIGCYRGLRHRKGMPVRGQRTRTNARTRRGRRGQAIGIKKKTVKK.

This sequence belongs to the universal ribosomal protein uS13 family. As to quaternary structure, part of the 30S ribosomal subunit. Forms a loose heterodimer with protein S19. Forms two bridges to the 50S subunit in the 70S ribosome.

Its function is as follows. Located at the top of the head of the 30S subunit, it contacts several helices of the 16S rRNA. In the 70S ribosome it contacts the 23S rRNA (bridge B1a) and protein L5 of the 50S subunit (bridge B1b), connecting the 2 subunits; these bridges are implicated in subunit movement. Contacts the tRNAs in the A and P-sites. The sequence is that of Small ribosomal subunit protein uS13 from Roseiflexus sp. (strain RS-1).